Consider the following 4383-residue polypeptide: Replicase polyprotein 1a (4383 aa).

A CoV Nsp1 globular domain is found at 54–196 (PENHVMVDCR…PWVMYLRKRG (143 aa)). The BetaCoV Nsp1 C-terminal domain maps to 216-246 (FKVEDAYDQVHDEPKGKFSKKAYALIRGYRG). One can recognise a CoV Nsp2 N-terminal domain in the interval 250–514 (LLYVDQYGCD…VKETNLICKA (265 aa)). The Zn(2+) site is built by cysteine 392, cysteine 397, cysteine 413, and cysteine 416. Residues 392–416 (CEQDSCDFKGWIPGNMIDGFACTTC) form a C4 region. The region spanning 524-713 (CGNLHQRELL…AQAFQSVAKV (190 aa)) is the CoV Nsp2 middle domain. A CoV Nsp2 C-terminal domain is found at 733–851 (RRRICLSGRK…LDQAWRVPCA (119 aa)). Residues 853–966 (RRVTFKEQPT…LYCAFTAPED (114 aa)) form the Ubiquitin-like 1 domain. The interval 995 to 1025 (PCVASEQEESSEVLEDTLDDGPSVETSDSQV) is disordered. Residues 1000–1013 (EQEESSEVLEDTLD) are compositionally biased toward acidic residues. The Peptidase C16 1 domain maps to 1036–1274 (DLESVIQDYE…IAQLYGSCIT (239 aa)). Catalysis depends on cysteine 1074, which acts as the For PL1-PRO activity. Zn(2+) is bound by residues cysteine 1151, cysteine 1154, cysteine 1177, and cysteine 1179. The segment at 1151–1179 (CIKCDLALKLKGLDAMFFYGDVVSHICKC) adopts a C4-type 1 zinc-finger fold. Residues histidine 1225 and aspartate 1236 each act as for PL1-PRO activity in the active site. Residues 1275–1435 (PNVCFVKGDI…LISKCQITAV (161 aa)) enclose the Macro domain. In terms of domain architecture, DPUP spans 1491–1563 (DDARTFVQSN…VAQIKALFLD (73 aa)). The region spanning 1562 to 1617 (LDKVDILLTVDGVNFTNRFVPVGESFGKSLGNVFCDGVNVTKHKCDINYKGKVFFQ) is the Ubiquitin-like 2 domain. The Peptidase C16 2 domain occupies 1631-1892 (SSFNFDQKEL…KIEYKPDLSQ (262 aa)). Cysteine 1671 functions as the For PL2-PRO activity in the catalytic mechanism. Positions 1749, 1751, 1783, and 1785 each coordinate Zn(2+). Residues 1749-1785 (CKCGVKQEQRTGLDAVMHFGTLSREDLEIGYTVDCSC) form a C4-type 2 zinc finger. Catalysis depends on for PL2-PRO activity residues histidine 1828 and aspartate 1842. In terms of domain architecture, Nucleic acid-binding spans 1906-2007 (IKAQFKTFEK…TYFNRPLLVD (102 aa)). In terms of domain architecture, G2M spans 2020–2169 (DDSGDSSESG…ADNKVIYTTE (150 aa)). A run of 3 helical transmembrane segments spans residues 2138–2158 (TSAC…WIKI), 2199–2219 (ACII…NVIF), and 2221–2241 (DFYL…AQWI). Residues 2138–2385 (TSACFNFIKW…ASFIKLFSLF (248 aa)) form an HD1 region. In terms of domain architecture, 3Ecto spans 2235 to 2296 (GKIAQWIKNT…AIDVVQYEAD (62 aa)). Intrachain disulfides connect cysteine 2251-cysteine 2275 and cysteine 2266-cysteine 2272. Transmembrane regions (helical) follow at residues 2313–2333 (LIVS…LISI), 2343–2363 (LFML…ANML), and 2365–2385 (AHVF…FSLF). The tract at residues 2383–2473 (SLFKHVAYGC…ELKRPIQPTD (91 aa)) is Y1. Positions 2383–2750 (SLFKHVAYGC…LTTPFSLKGG (368 aa)) constitute a CoV Nsp3 Y domain. The Zn(2+) site is built by histidine 2387, cysteine 2392, cysteine 2397, cysteine 2400, cysteine 2433, histidine 2436, cysteine 2440, and cysteine 2443. The ZF1 stretch occupies residues 2387–2400 (HVAYGCSKSGCLFC). Residues 2433 to 2443 (CSKHQWNCIDC) are ZF2. Residues 2474 to 2566 (VAYHTVTDVK…MVDKNLITTA (93 aa)) form a Y2 region. The interval 2474 to 2750 (VAYHTVTDVK…LTTPFSLKGG (277 aa)) is coV-Y. The interval 2567–2649 (NTGTSVTETM…DSVMSAVSAG (83 aa)) is Y3. A Y4 region spans residues 2650–2750 (LELTDESCNN…LTTPFSLKGG (101 aa)). Helical transmembrane passes span 2752 to 2772 (VFSY…IGLW), 2824 to 2844 (STFG…VAVI), 3009 to 3029 (VFDL…FLAL), 3031 to 3051 (ASSI…YYLI), 3063 to 3083 (VVFV…VFQV), 3090 to 3110 (VYAI…SVIM), and 3115 to 3135 (LVMY…AVVV). Residues 2752–3135 (VFSYFVYVCF…FCLLYIAVVV (384 aa)) form an HD2 region. Positions 3149–3246 (LGTSVRSDGT…TASVSTSFLQ (98 aa)) constitute a Nsp4C domain. One can recognise a Peptidase C30 domain in the interval 3247–3549 (SGIVKMVNPT…YQQLAGIKLQ (303 aa)). Catalysis depends on for 3CL-PRO activity residues histidine 3287 and cysteine 3391. The tract at residues 3319–3775 (LSLTVMSYQM…IISCYWGLFS (457 aa)) is HD3. 7 consecutive transmembrane segments (helical) span residues 3558–3578 (GTVC…TAFV), 3588–3608 (TNMF…MLLV), 3615–3635 (LTMY…LVVY), 3657–3677 (TYTD…FVTL), 3684–3704 (LFSF…WYKG), 3711–3731 (ILLM…LSMA), and 3755–3775 (IVLL…GLFS). The region spanning 3837-3925 (SKLTDVKCAN…DYAKDNTVLQ (89 aa)) is the RdRp Nsp7 cofactor domain. The RdRp Nsp8 cofactor domain occupies 3926 to 4122 (ALQSEFVNMA…YNEVSATVLQ (197 aa)). Residues 4123 to 4232 (NNELMPAKLK…GTISSTVRLQ (110 aa)) form the Nsp9 ssRNA-binding domain. The ExoN/MTase coactivator domain maps to 4233–4370 (AGTATEYASN…CVSTDTTVQS (138 aa)). Positions 4306, 4309, 4315, 4322, 4348, 4351, 4359, and 4361 each coordinate Zn(2+). Zinc fingers lie at residues 4306–4322 (CIYC…DGLC) and 4348–4361 (CRVC…SCSC).

Belongs to the coronaviruses polyprotein 1ab family. As to quaternary structure, 3CL-PRO exists as monomer and homodimer. Eight copies of nsp7 and eight copies of nsp8 assemble to form a heterohexadecamer. Nsp9 is a dimer. Nsp10 forms a dodecamer. Specific enzymatic cleavages in vivo by its own proteases yield mature proteins. 3CL-PRO and PL-PRO proteinases are autocatalytically processed.

Its subcellular location is the host membrane. The protein localises to the host cytoplasm. The protein resides in the host perinuclear region. The catalysed reaction is Thiol-dependent hydrolysis of ester, thioester, amide, peptide and isopeptide bonds formed by the C-terminal Gly of ubiquitin (a 76-residue protein attached to proteins as an intracellular targeting signal).. It carries out the reaction TSAVLQ-|-SGFRK-NH2 and SGVTFQ-|-GKFKK the two peptides corresponding to the two self-cleavage sites of the SARS 3C-like proteinase are the two most reactive peptide substrates. The enzyme exhibits a strong preference for substrates containing Gln at P1 position and Leu at P2 position.. It catalyses the reaction a 5'-end diphospho-ribonucleoside in mRNA + GTP + H(+) = a 5'-end (5'-triphosphoguanosine)-ribonucleoside in mRNA + diphosphate. In terms of biological role, the papain-like proteinase 1 (PL1-PRO) and papain-like proteinase 2 (PL2-PRO) are responsible for the cleavages located at the N-terminus of the replicase polyprotein. In addition, PLP2 possesses a deubiquitinating/deISGylating activity and processes both 'Lys-48'- and 'Lys-63'-linked polyubiquitin chains from cellular substrates. Antagonizes innate immune induction of type I interferon by blocking the phosphorylation, dimerization and subsequent nuclear translocation of host IRF-3. Its function is as follows. Responsible for the majority of cleavages as it cleaves the C-terminus of replicase polyprotein at 11 sites. Recognizes substrates containing the core sequence [ILMVF]-Q-|-[SGACN]. Inhibited by the substrate-analog Cbz-Val-Asn-Ser-Thr-Leu-Gln-CMK. Also contains an ADP-ribose-1''-phosphate (ADRP)-binding function. Functionally, nsp7-nsp8 hexadecamer may possibly confer processivity to the polymerase, maybe by binding to dsRNA or by producing primers utilized by the latter. Catalytic subunit of viral RNA capping enzyme which catalyzes the RNA guanylyltransferase reaction for genomic and sub-genomic RNAs. The kinase-like NiRAN domain of NSP12 transfers RNA to the amino terminus of NSP9, forming a covalent RNA-protein intermediate. Subsequently, the NiRAN domain transfers RNA to GDP, forming the core cap structure GpppA-RNA. The NSP14 and NSP16 methyltransferases then add methyl groups to form functional cap structures. In terms of biological role, binds to the 40S ribosomal subunit and inhibits host translation. The nsp1-40S ribosome complex further induces an endonucleolytic cleavage near the 5'UTR of host mRNAs, targeting them for degradation. This inhibits the integrated stress response (ISR) in the infected cell by preventing EIF2S1/eIF2-alpha phosphorylation upstream of stress granule formation and depletes host G3BP1. By suppressing host gene expression, nsp1 facilitates efficient viral gene expression in infected cells and evasion from host immune response. The sequence is that of Replicase polyprotein 1a from Human coronavirus OC43 (HCoV-OC43).